A 413-amino-acid polypeptide reads, in one-letter code: Phosphopentomutase (413 aa).

6 residues coordinate Mn(2+): D11, D306, H311, D347, H348, and H359.

This sequence belongs to the phosphopentomutase family. Mn(2+) is required as a cofactor.

It is found in the cytoplasm. It catalyses the reaction 2-deoxy-alpha-D-ribose 1-phosphate = 2-deoxy-D-ribose 5-phosphate. The enzyme catalyses alpha-D-ribose 1-phosphate = D-ribose 5-phosphate. Its pathway is carbohydrate degradation; 2-deoxy-D-ribose 1-phosphate degradation; D-glyceraldehyde 3-phosphate and acetaldehyde from 2-deoxy-alpha-D-ribose 1-phosphate: step 1/2. Functionally, isomerase that catalyzes the conversion of deoxy-ribose 1-phosphate (dRib-1-P) and ribose 1-phosphate (Rib-1-P) to deoxy-ribose 5-phosphate (dRib-5-P) and ribose 5-phosphate (Rib-5-P), respectively. This chain is Phosphopentomutase, found in Helicobacter pylori (strain G27).